The chain runs to 203 residues: E3 ubiquitin-protein ligase rnf152-A (203 aa).

Residues 12-55 (CQICFNYYSPRRRPKLLDCKRTCCSVCLQQMRACQKDLRCPWCR) form an RING-type; degenerate zinc finger. A helical membrane pass occupies residues 167–187 (SGICTVILVACVLVFLLGIVL).

It belongs to the RNF152 family.

The protein localises to the lysosome membrane. It carries out the reaction S-ubiquitinyl-[E2 ubiquitin-conjugating enzyme]-L-cysteine + [acceptor protein]-L-lysine = [E2 ubiquitin-conjugating enzyme]-L-cysteine + N(6)-ubiquitinyl-[acceptor protein]-L-lysine.. It functions in the pathway protein modification; protein ubiquitination. Functionally, E3 ubiquitin-protein ligase that acts as a negative regulator of mTORC1 signaling by mediating ubiquitination of RagA/RRAGA and RHEB. Catalyzes 'Lys-63'-linked polyubiquitination of RagA/RRAGA in response to amino acid starvation, thereby regulating mTORC1 signaling. Also mediates monoubiquitination of RHEB, promoting its association with the TSC-TBC complex and subsequent inhibition. Also mediates 'Lys-48'-linked polyubiquitination of target proteins and their subsequent targeting to the proteasome for degradation. This chain is E3 ubiquitin-protein ligase rnf152-A, found in Xenopus laevis (African clawed frog).